A 184-amino-acid polypeptide reads, in one-letter code: Large ribosomal subunit protein uL5 (184 aa).

Belongs to the universal ribosomal protein uL5 family. In terms of assembly, part of the 50S ribosomal subunit; part of the 5S rRNA/L5/L18/L25 subcomplex. Contacts the 5S rRNA and the P site tRNA. Forms a bridge to the 30S subunit in the 70S ribosome.

In terms of biological role, this is one of the proteins that bind and probably mediate the attachment of the 5S RNA into the large ribosomal subunit, where it forms part of the central protuberance. In the 70S ribosome it contacts protein S13 of the 30S subunit (bridge B1b), connecting the 2 subunits; this bridge is implicated in subunit movement. Contacts the P site tRNA; the 5S rRNA and some of its associated proteins might help stabilize positioning of ribosome-bound tRNAs. In Wolinella succinogenes (strain ATCC 29543 / DSM 1740 / CCUG 13145 / JCM 31913 / LMG 7466 / NCTC 11488 / FDC 602W) (Vibrio succinogenes), this protein is Large ribosomal subunit protein uL5.